The following is a 500-amino-acid chain: Aspartyl/glutamyl-tRNA(Asn/Gln) amidotransferase subunit B (500 aa).

It belongs to the GatB/GatE family. GatB subfamily. In terms of assembly, heterotrimer of A, B and C subunits.

The catalysed reaction is L-glutamyl-tRNA(Gln) + L-glutamine + ATP + H2O = L-glutaminyl-tRNA(Gln) + L-glutamate + ADP + phosphate + H(+). It carries out the reaction L-aspartyl-tRNA(Asn) + L-glutamine + ATP + H2O = L-asparaginyl-tRNA(Asn) + L-glutamate + ADP + phosphate + 2 H(+). In terms of biological role, allows the formation of correctly charged Asn-tRNA(Asn) or Gln-tRNA(Gln) through the transamidation of misacylated Asp-tRNA(Asn) or Glu-tRNA(Gln) in organisms which lack either or both of asparaginyl-tRNA or glutaminyl-tRNA synthetases. The reaction takes place in the presence of glutamine and ATP through an activated phospho-Asp-tRNA(Asn) or phospho-Glu-tRNA(Gln). The chain is Aspartyl/glutamyl-tRNA(Asn/Gln) amidotransferase subunit B from Sinorhizobium medicae (strain WSM419) (Ensifer medicae).